We begin with the raw amino-acid sequence, 477 residues long: Argininosuccinate lyase (477 aa).

It belongs to the lyase 1 family. Argininosuccinate lyase subfamily.

The protein resides in the cytoplasm. The enzyme catalyses 2-(N(omega)-L-arginino)succinate = fumarate + L-arginine. It functions in the pathway amino-acid biosynthesis; L-arginine biosynthesis; L-arginine from L-ornithine and carbamoyl phosphate: step 3/3. This chain is Argininosuccinate lyase, found in Streptomyces avermitilis (strain ATCC 31267 / DSM 46492 / JCM 5070 / NBRC 14893 / NCIMB 12804 / NRRL 8165 / MA-4680).